Here is a 43-residue protein sequence, read N- to C-terminus: Protein PsbN (43 aa).

The helical transmembrane segment at 7–29 (LSIALAAVCIGVTGYSIYLSFGP) threads the bilayer.

This sequence belongs to the PsbN family.

The protein resides in the cellular thylakoid membrane. May play a role in photosystem I and II biogenesis. This chain is Protein PsbN, found in Thermosynechococcus vestitus (strain NIES-2133 / IAM M-273 / BP-1).